The chain runs to 221 residues: ATP phosphoribosyltransferase (221 aa).

Belongs to the ATP phosphoribosyltransferase family. Short subfamily. In terms of assembly, heteromultimer composed of HisG and HisZ subunits.

It localises to the cytoplasm. It catalyses the reaction 1-(5-phospho-beta-D-ribosyl)-ATP + diphosphate = 5-phospho-alpha-D-ribose 1-diphosphate + ATP. It participates in amino-acid biosynthesis; L-histidine biosynthesis; L-histidine from 5-phospho-alpha-D-ribose 1-diphosphate: step 1/9. Functionally, catalyzes the condensation of ATP and 5-phosphoribose 1-diphosphate to form N'-(5'-phosphoribosyl)-ATP (PR-ATP). Has a crucial role in the pathway because the rate of histidine biosynthesis seems to be controlled primarily by regulation of HisG enzymatic activity. The protein is ATP phosphoribosyltransferase of Rhizorhabdus wittichii (strain DSM 6014 / CCUG 31198 / JCM 15750 / NBRC 105917 / EY 4224 / RW1) (Sphingomonas wittichii).